We begin with the raw amino-acid sequence, 113 residues long: Outer membrane protein assembly factor BamE (113 aa).

A signal peptide spans 1-19 (MRCKTLTAAAAVLLMLTAG). Residue cysteine 20 is the site of N-palmitoyl cysteine attachment. The S-diacylglycerol cysteine moiety is linked to residue cysteine 20.

The protein belongs to the BamE family. Part of the Bam complex, which is composed of the outer membrane protein BamA, and four lipoproteins BamB, BamC, BamD and BamE.

The protein localises to the cell outer membrane. Its function is as follows. Part of the outer membrane protein assembly complex, which is involved in assembly and insertion of beta-barrel proteins into the outer membrane. In Escherichia coli O6:H1 (strain CFT073 / ATCC 700928 / UPEC), this protein is Outer membrane protein assembly factor BamE.